The primary structure comprises 545 residues: MTKNYIFITGGVVSSLGKGIAAASLGAILKARNLNITIIKLDPYINVDPGTISPIQHGEVFVTEDGAETDLDLGHYERFIHTKMTFLNNFTTGGVYSQVLKKERRGDYLGATIQVIPHITNAIKERIILCSKNSNIILVEIGGTVGDIESLPFLEAIRQMAVDIGRKNVIYIHLTLVPYIATAGEIKTKPTQHSVKQLLSIGIQPDILICRSEKTVPLHERKKIALFCNVPVDAVISLKDVNSIYKIPKLLKNQKLDDYICNYFKLNVPEADLQEWEEVIYAEKNFNNTIVIGIIGKYIKLPDAYKSVMEALKHAGFKNKIKVDIQLINSQEVENKNFQILKNLNGILIPGGFGDRGIVGKLLSIQYARENHIPYFGICLGMQIAIIEFAQNVVGIKEANSTEFDPQCKYPIIDLIKNRPNNSSKNYNKIENRINLGGTMRLGSQPCKLSANSLSRKLYNQEIIIERHRHRYEVNNLLFKKIEAAGLQVTGRSQKNNVVEIIELSNHPWFLACQFHPEFTSTPRDGHPLFIDFIKSAGKHKKNFI.

The segment at 1–266 (MTKNYIFITG…DDYICNYFKL (266 aa)) is amidoligase domain. Residue Ser14 coordinates CTP. Ser14 contributes to the UTP binding site. ATP is bound by residues 15–20 (SLGKGI) and Asp72. Residues Asp72 and Glu140 each coordinate Mg(2+). Residues 147–149 (DIE), 187–192 (KTKPTQ), and Lys223 each bind CTP. UTP is bound by residues 187-192 (KTKPTQ) and Lys223. Residue 239-241 (KDV) participates in ATP binding. A Glutamine amidotransferase type-1 domain is found at 291-543 (VIGIIGKYIK…IKSAGKHKKN (253 aa)). An L-glutamine-binding site is contributed by Gly352. Cys379 serves as the catalytic Nucleophile; for glutamine hydrolysis. Residues 380-383 (LGMQ), Glu403, and Arg471 contribute to the L-glutamine site. Residues His516 and Glu518 contribute to the active site.

The protein belongs to the CTP synthase family. Homotetramer.

It carries out the reaction UTP + L-glutamine + ATP + H2O = CTP + L-glutamate + ADP + phosphate + 2 H(+). The catalysed reaction is L-glutamine + H2O = L-glutamate + NH4(+). The enzyme catalyses UTP + NH4(+) + ATP = CTP + ADP + phosphate + 2 H(+). It functions in the pathway pyrimidine metabolism; CTP biosynthesis via de novo pathway; CTP from UDP: step 2/2. Its activity is regulated as follows. Allosterically activated by GTP, when glutamine is the substrate; GTP has no effect on the reaction when ammonia is the substrate. The allosteric effector GTP functions by stabilizing the protein conformation that binds the tetrahedral intermediate(s) formed during glutamine hydrolysis. Inhibited by the product CTP, via allosteric rather than competitive inhibition. Functionally, catalyzes the ATP-dependent amination of UTP to CTP with either L-glutamine or ammonia as the source of nitrogen. Regulates intracellular CTP levels through interactions with the four ribonucleotide triphosphates. The polypeptide is CTP synthase (Buchnera aphidicola subsp. Acyrthosiphon pisum (strain Tuc7)).